An 84-amino-acid polypeptide reads, in one-letter code: U4-theraphotoxin-Hhn1b (84 aa).

Positions 1-22 (MKVTLIAILTCAAVLVLHTTAA) are cleaved as a signal peptide. A propeptide spanning residues 23 to 47 (EELEESQLMEVGMPDTELAAVDEER) is cleaved from the precursor. Intrachain disulfides connect Cys51–Cys65, Cys55–Cys76, and Cys70–Cys81.

It belongs to the neurotoxin 12 (Hwtx-2) family. 02 (Hwtx-2) subfamily. In terms of tissue distribution, expressed by the venom gland.

It is found in the secreted. Functionally, postsynaptic neurotoxin. This chain is U4-theraphotoxin-Hhn1b, found in Cyriopagopus hainanus (Chinese bird spider).